The following is a 215-amino-acid chain: MATERHYSPLDRLLLQADTAMRTLLPFSGQPSRPSPAIVQPDVELDESQTRHIAGLMRINHTGEVCAQALYQGQALTAKLPQVRKAMEHAAEEEIDHLAWCEQRIRQLGSHPSVLNPLFYGMSFGIGALAGMVSDKVSLGFVAATEHQVCKHLDEHLEQIPHEDEKSRAILEQMRVDEEQHADSALEAGGYRFPAPVRFGMSMLAKVMTKSTYRI.

E64, E94, H97, E146, E178, and H181 together coordinate Fe cation.

It belongs to the COQ7 family. Fe cation is required as a cofactor.

It is found in the cell membrane. It catalyses the reaction a 5-methoxy-2-methyl-3-(all-trans-polyprenyl)benzene-1,4-diol + AH2 + O2 = a 3-demethylubiquinol + A + H2O. It functions in the pathway cofactor biosynthesis; ubiquinone biosynthesis. Catalyzes the hydroxylation of 2-nonaprenyl-3-methyl-6-methoxy-1,4-benzoquinol during ubiquinone biosynthesis. This chain is 3-demethoxyubiquinol 3-hydroxylase, found in Pseudomonas putida (strain W619).